Reading from the N-terminus, the 126-residue chain is Probable prefoldin subunit 4 (126 aa).

Belongs to the prefoldin subunit beta family. Heterohexamer of two PFD-alpha type and four PFD-beta type subunits.

In terms of biological role, binds specifically to cytosolic chaperonin (c-CPN) and transfers target proteins to it. Binds to nascent polypeptide chain and promotes folding in an environment in which there are many competing pathways for nonnative proteins. Appears to play a non-essential role. The polypeptide is Probable prefoldin subunit 4 (Caenorhabditis briggsae).